We begin with the raw amino-acid sequence, 334 residues long: Holliday junction branch migration complex subunit RuvB (334 aa).

The segment at 1–182 (MDDRMVDQSM…FGVHLRLEYY (182 aa)) is large ATPase domain (RuvB-L). Residues leucine 21, arginine 22, glycine 63, lysine 66, threonine 67, threonine 68, 129-131 (EDF), arginine 172, tyrosine 182, and arginine 219 contribute to the ATP site. Mg(2+) is bound at residue threonine 67. The tract at residues 183-253 (QELELKEIIV…TTRASLQLLQ (71 aa)) is small ATPAse domain (RuvB-S). Residues 256-334 (DEGLDYIDHK…HFSKKNGKKE (79 aa)) form a head domain (RuvB-H) region. DNA contacts are provided by arginine 292, arginine 311, and arginine 316.

Belongs to the RuvB family. Homohexamer. Forms an RuvA(8)-RuvB(12)-Holliday junction (HJ) complex. HJ DNA is sandwiched between 2 RuvA tetramers; dsDNA enters through RuvA and exits via RuvB. An RuvB hexamer assembles on each DNA strand where it exits the tetramer. Each RuvB hexamer is contacted by two RuvA subunits (via domain III) on 2 adjacent RuvB subunits; this complex drives branch migration. In the full resolvosome a probable DNA-RuvA(4)-RuvB(12)-RuvC(2) complex forms which resolves the HJ.

It is found in the cytoplasm. It catalyses the reaction ATP + H2O = ADP + phosphate + H(+). Functionally, the RuvA-RuvB-RuvC complex processes Holliday junction (HJ) DNA during genetic recombination and DNA repair, while the RuvA-RuvB complex plays an important role in the rescue of blocked DNA replication forks via replication fork reversal (RFR). RuvA specifically binds to HJ cruciform DNA, conferring on it an open structure. The RuvB hexamer acts as an ATP-dependent pump, pulling dsDNA into and through the RuvAB complex. RuvB forms 2 homohexamers on either side of HJ DNA bound by 1 or 2 RuvA tetramers; 4 subunits per hexamer contact DNA at a time. Coordinated motions by a converter formed by DNA-disengaged RuvB subunits stimulates ATP hydrolysis and nucleotide exchange. Immobilization of the converter enables RuvB to convert the ATP-contained energy into a lever motion, pulling 2 nucleotides of DNA out of the RuvA tetramer per ATP hydrolyzed, thus driving DNA branch migration. The RuvB motors rotate together with the DNA substrate, which together with the progressing nucleotide cycle form the mechanistic basis for DNA recombination by continuous HJ branch migration. Branch migration allows RuvC to scan DNA until it finds its consensus sequence, where it cleaves and resolves cruciform DNA. This is Holliday junction branch migration complex subunit RuvB from Staphylococcus saprophyticus subsp. saprophyticus (strain ATCC 15305 / DSM 20229 / NCIMB 8711 / NCTC 7292 / S-41).